The primary structure comprises 585 residues: SCF E3 ubiquitin ligase complex F-box protein grrA (585 aa).

A compositionally biased stretch (polar residues) spans 1-10 (MARSRQPTRF). Disordered stretches follow at residues 1–34 (MARS…DTDF) and 41–60 (DSQS…QNDP). Residues 11–25 (SSEAPSESSSSTSPE) show a composition bias toward low complexity. In terms of domain architecture, F-box spans 65–113 (PPIAYLPPEILISIFSKLSSPRDLLSCLLVCRIWALNCVGLLWHRPSCN). LRR repeat units lie at residues 147–171 (TEDV…TLTN), 172–197 (CRKL…DVSE), 198–223 (LRSL…NITG), 224–249 (CVKV…KLNG), 250–275 (VSQV…DLQE), 276–301 (CKLV…RLAH), 302–329 (CTEI…DLTA), 330–355 (CENI…VLAK), 356–381 (CKFI…HLGH), 382–407 (CSNI…DLAC), 408–432 (CSRL…GLVK), 433–465 (CQLI…HLSY), and 466–491 (CVNL…SLTG).

In terms of assembly, part of a SCF E3 ubiquitin ligase complex. As to expression, specifically expressed in ascus mother cells.

Its subcellular location is the cytoplasm. Its function is as follows. Involved in meiosis and required for ascospore formation. Involved in substrate recognition in ubiquitin-dependent degradation. This is SCF E3 ubiquitin ligase complex F-box protein grrA (grrA) from Emericella nidulans (strain FGSC A4 / ATCC 38163 / CBS 112.46 / NRRL 194 / M139) (Aspergillus nidulans).